A 202-amino-acid chain; its full sequence is 3-isopropylmalate dehydratase small subunit (202 aa).

The protein belongs to the LeuD family. LeuD type 1 subfamily. Heterodimer of LeuC and LeuD.

The catalysed reaction is (2R,3S)-3-isopropylmalate = (2S)-2-isopropylmalate. Its pathway is amino-acid biosynthesis; L-leucine biosynthesis; L-leucine from 3-methyl-2-oxobutanoate: step 2/4. Catalyzes the isomerization between 2-isopropylmalate and 3-isopropylmalate, via the formation of 2-isopropylmaleate. This is 3-isopropylmalate dehydratase small subunit from Rhizobium rhizogenes (strain K84 / ATCC BAA-868) (Agrobacterium radiobacter).